The primary structure comprises 389 residues: Dihydroorotase (389 aa).

Residues H51 and H53 each contribute to the Zn(2+) site. Substrate is bound by residues 53-55 (HVR) and N85. Zn(2+) is bound by residues K133, H158, H193, and D256. K133 bears the N6-carboxylysine mark. D256 is a catalytic residue. Substrate contacts are provided by residues H260 and 274–275 (PG).

It belongs to the metallo-dependent hydrolases superfamily. DHOase family. Class I DHOase subfamily. Requires Zn(2+) as cofactor.

It carries out the reaction (S)-dihydroorotate + H2O = N-carbamoyl-L-aspartate + H(+). It functions in the pathway pyrimidine metabolism; UMP biosynthesis via de novo pathway; (S)-dihydroorotate from bicarbonate: step 3/3. In terms of biological role, catalyzes the reversible cyclization of carbamoyl aspartate to dihydroorotate. The chain is Dihydroorotase from Sulfolobus acidocaldarius (strain ATCC 33909 / DSM 639 / JCM 8929 / NBRC 15157 / NCIMB 11770).